The primary structure comprises 208 residues: ATP phosphoribosyltransferase (208 aa).

The protein belongs to the ATP phosphoribosyltransferase family. Short subfamily. As to quaternary structure, heteromultimer composed of HisG and HisZ subunits.

It is found in the cytoplasm. It catalyses the reaction 1-(5-phospho-beta-D-ribosyl)-ATP + diphosphate = 5-phospho-alpha-D-ribose 1-diphosphate + ATP. It functions in the pathway amino-acid biosynthesis; L-histidine biosynthesis; L-histidine from 5-phospho-alpha-D-ribose 1-diphosphate: step 1/9. Its function is as follows. Catalyzes the condensation of ATP and 5-phosphoribose 1-diphosphate to form N'-(5'-phosphoribosyl)-ATP (PR-ATP). Has a crucial role in the pathway because the rate of histidine biosynthesis seems to be controlled primarily by regulation of HisG enzymatic activity. The chain is ATP phosphoribosyltransferase from Thermotoga neapolitana (strain ATCC 49049 / DSM 4359 / NBRC 107923 / NS-E).